The sequence spans 699 residues: D-(-)-3-hydroxybutyrate oligomer hydrolase (699 aa).

The signal sequence occupies residues 1-33; the sequence is MTAIRGGSRRAPGLALALLGGVLLGACHGDENA. The active-site Charge relay system is the Ser311.

The protein belongs to the D-(-)-3-hydroxybutyrate oligomer hydrolase family.

Its subcellular location is the secreted. It carries out the reaction (3R)-hydroxybutanoate dimer + H2O = 2 (R)-3-hydroxybutanoate + H(+). It participates in lipid metabolism; butanoate metabolism. Participates in the degradation of poly-3-hydroxybutyrate (PHB). It works downstream of poly(3-hydroxybutyrate) depolymerase, hydrolyzing D(-)-3-hydroxybutyrate oligomers of various length (3HB-oligomers) into 3HB-monomers. In Burkholderia pseudomallei (strain 1710b), this protein is D-(-)-3-hydroxybutyrate oligomer hydrolase.